The sequence spans 396 residues: MINVPSIESCDFHNKNVLLRVDFNVPIKNGRICDATRILRALPTIQYLANAGAKVIVISHFGRPKAKDSNLSLKNVVETLSRLLSKEVKFIDDCIGERVQRAINAMDGGDIILLENLRFYKEEEQNDSNFAKQLASLADIYINDAFSCSHRAHASISRITEFLPSYAGFCLQDELKYLEQAISFDAKPITAIVGGAKISTKIKMLIKLAEKVDYLILGGAIANNFLLFNKVNIGKSFFQNGVDDLLHDIVETANKNNCKIVVPEDVLVAVNSDYSTGVLRKIESILDGDIILDIGPQTLSTISGIIASSKTLLWNGPIGVFEHSAFANGTVEVMRVVSDLTHEGKLTSVIGGGDSLSAINTAGLADKDFTYISTGGGAFLSWLSGDEMPGLRSTLD.

Substrate contacts are provided by residues 22-24 (DFN), Arg-37, 60-63 (HFGR), Arg-118, and Arg-151. Residues Lys-201, Glu-322, and 352-355 (GGDS) contribute to the ATP site.

It belongs to the phosphoglycerate kinase family. In terms of assembly, monomer.

Its subcellular location is the cytoplasm. It carries out the reaction (2R)-3-phosphoglycerate + ATP = (2R)-3-phospho-glyceroyl phosphate + ADP. Its pathway is carbohydrate degradation; glycolysis; pyruvate from D-glyceraldehyde 3-phosphate: step 2/5. This is Phosphoglycerate kinase from Wolbachia pipientis subsp. Culex pipiens (strain wPip).